The primary structure comprises 37 residues: Large ribosomal subunit protein bL36 (37 aa).

It belongs to the bacterial ribosomal protein bL36 family.

The protein is Large ribosomal subunit protein bL36 (rpmJ) of Mycoplasmoides gallisepticum (strain R(low / passage 15 / clone 2)) (Mycoplasma gallisepticum).